The chain runs to 363 residues: Guanine nucleotide-binding protein alpha-11 subunit (363 aa).

The 338-residue stretch at lysine 26–methionine 363 folds into the G-alpha domain. The segment at lysine 29–threonine 42 is G1 motif. Residues glycine 34 to serine 41, leucine 172 to threonine 178, aspartate 197 to glutamine 201, asparagine 276 to aspartate 279, and alanine 335 each bind GTP. Mg(2+) contacts are provided by serine 41 and threonine 178. Positions aspartate 170–threonine 178 are G2 motif. Residues leucine 193–arginine 202 form a G3 motif region. The interval isoleucine 272 to aspartate 279 is G4 motif. The tract at residues threonine 333–threonine 338 is G5 motif.

The protein belongs to the G-alpha family. G proteins are composed of 3 units; alpha, beta and gamma. The alpha chain contains the guanine nucleotide binding site. Expressed in ADL and ASH neurons.

Guanine nucleotide-binding proteins (G proteins) are involved as modulators or transducers in various transmembrane signaling systems. Mediates the transduction of food and serotonin signals, which modulates the avoidance response to the odorant octanol. Has a role in lifespan to promote longevity. In Caenorhabditis elegans, this protein is Guanine nucleotide-binding protein alpha-11 subunit (gpa-11).